The primary structure comprises 289 residues: Glucosamine-6-phosphate deaminase 1 (289 aa).

Position 64 is an N6-acetyllysine (Lys-64). Asp-72 acts as the Proton acceptor; for enolization step in catalysis. The For ring-opening step role is filled by Asp-141. His-143 functions as the Proton acceptor; for ring-opening step in the catalytic mechanism. Glu-148 serves as the catalytic For ring-opening step. Thr-161 is modified (phosphothreonine).

It belongs to the glucosamine/galactosamine-6-phosphate isomerase family. In terms of assembly, homohexamer.

The protein resides in the cytoplasm. It catalyses the reaction alpha-D-glucosamine 6-phosphate + H2O = beta-D-fructose 6-phosphate + NH4(+). It functions in the pathway nucleotide-sugar biosynthesis; UDP-N-acetyl-alpha-D-glucosamine biosynthesis; alpha-D-glucosamine 6-phosphate from D-fructose 6-phosphate: step 1/1. Allosterically activated by N-acetylglucosamine-6-phosphate (GlcNAc6P). Catalyzes the reversible conversion of alpha-D-glucosamine 6-phosphate (GlcN-6P) into beta-D-fructose 6-phosphate (Fru-6P) and ammonium ion, a regulatory reaction step in de novo uridine diphosphate-N-acetyl-alpha-D-glucosamine (UDP-GlcNAc) biosynthesis via hexosamine pathway. Deamination is coupled to aldo-keto isomerization mediating the metabolic flux from UDP-GlcNAc toward Fru-6P. At high ammonium level can drive amination and isomerization of Fru-6P toward hexosamines and UDP-GlcNAc synthesis. Has a role in fine tuning the metabolic fluctuations of cytosolic UDP-GlcNAc and their effects on hyaluronan synthesis that occur during tissue remodeling. Seems to trigger calcium oscillations in mammalian eggs. These oscillations serve as the essential trigger for egg activation and early development of the embryo. In Bos taurus (Bovine), this protein is Glucosamine-6-phosphate deaminase 1.